A 3646-amino-acid chain; its full sequence is Platelet adherence protein A (3646 aa).

The first 33 residues, 1–33 (MKDFLKKVLILFTVLLMSMPSSVLNLGTSVVRA), serve as a signal peptide directing secretion. Positions 34 to 359 (DDPLNIETRR…KNVSFYVNEQ (326 aa)) are does not bind platelets. The tract at residues 34–690 (DDPLNIETRR…NQDAHAKTKD (657 aa)) is F2, binds platelets, fibronectin, vitronectin, salivary pellicle, causes ADP secretion by dense granules. Residues 34–1328 (DDPLNIETRR…KFVLSDTLEE (1295 aa)) form a binds platelets region. Residues 75–373 (DLVILQDASG…VFSQKILESV (299 aa)) enclose the VWFA domain. Positions 214 to 216 (NGR) match the Integrin-like recognition motif NGR motif. The short motif at 416–418 (RGT) is the Integrin-like recognition motif RGT element. The segment at 439–466 (KNSFDYDLSKEARAPETDEDSEVDPPEN) is disordered. Over residues 445–454 (DLSKEARAPE) the composition is skewed to basic and acidic residues. An Integrin-like recognition motif AGD motif is present at residues 485-487 (AGD). Residues 709-3205 (TEVDKKVNEK…TVPNKATIAF (2497 aa)) are central region with RrgB repeats. 2 stretches are compositionally biased toward basic and acidic residues: residues 1124 to 1135 (KDKNDHKGEKET) and 1563 to 1573 (DHNPKFHKDSN). Disordered regions lie at residues 1124-1153 (KDKNDHKGEKETIPVTVTPPTEPNVSKKIN), 1563-1589 (DHNPKFHKDSNEVPVTPPSPEQPPIEK), 2011-2036 (FNNDPGTEQSSKPVPVIPPTPTEPEL), 2170-2198 (EKDSNIVPVTPPSPENPPVEKKVNNKPSA), 2320-2343 (KTEKSTEPVPVIPPSPEEPGIKKE), 2467-2492 (PNRPEIHKDSNRVPVTPPTPEEPEIK), 2611-2644 (ASYRVDFPNNPGVTKDSNEVPVTPPSPENPPIEK), 2767-2792 (FNNDPGTEQSSKPVPVIPPTPTEPEL), 2916-2948 (PNKPAVTKDSNEVPVTPPSPEQPPIEKDVNSKP), 3202-3252 (TIAF…NPST), 3371-3412 (AAAK…AALE), and 3550-3618 (NDKP…PKTG). Polar residues predominate over residues 2011-2022 (FNNDPGTEQSSK). Residues 2767-2778 (FNNDPGTEQSSK) show a composition bias toward polar residues. Residues 3210–3220 (GKNGTKESNPV) show a composition bias toward polar residues. Residues 3223–3237 (RPRDPEKPEEPKPNE) show a composition bias toward basic and acidic residues. Coiled-coil stretches lie at residues 3326-3376 (IAKI…AKEK) and 3408-3475 (VAAL…VNDK). Residues 3371-3406 (AAAKEKAAAAPATPAPASDSDAGNATATPAPADNNA) show a composition bias toward low complexity. Residues 3550–3560 (NDKPKVTNTVN) are compositionally biased toward polar residues. Residues 3563–3605 (PPEPTTPPQTPPHTPPTTPGTPPPTTPDTPPAPKGDLPPAPTP) are compositionally biased toward pro residues. The LPXTG sorting signal signature appears at 3614–3618 (LPKTG). The residue at position 3617 (T3617) is a Pentaglycyl murein peptidoglycan amidated threonine. Residues 3618 to 3646 (GTSATMVNEVIIGMILVLMGLLLRRKPKH) constitute a propeptide, removed by sortase.

It is found in the secreted. The protein resides in the cell wall. Whole bacterial adhesion to Chinese hamster ovary cells expressing GPIIbIIIa is abrogated by integrin inhibitor RGDS and GPIIbIIIa inhibitor Abciximab. In terms of biological role, a cell wall protein involved with Hsa in host cell interactions required for colonization and pathogenesis. Involved in recognition of platelets. Interacts with human platelet integrin receptor GPIIbIIIa (a complex of ITGA2B and ITGB3). Involved in platelet spreading, presumably by activation of outside-in signaling leading to platelet activation and then spreading. Spreading also involves GPIIbIIIa. Binding to platelets under static conditions causes platelet dense granules to secrete ADP (similar to release induced by fibrinogen binding), has no effect on platelet alpha granule release. The N-terminal 656 aa residue fragment (called F2) also binds platelets, causes dense granule secretion and allows platelet spreading. Acts in concert with Hsa to promote binding to human fibronectin (FN1) and vitronectin (VTN), and biofilm formation. F2 bind activated platelets more strongly than unactivated platelets. Binding to both FN1 and VTN is mediated at least in part by their glycosylation. This chain is Platelet adherence protein A, found in Streptococcus gordonii (strain Challis / ATCC 35105 / BCRC 15272 / CH1 / DL1 / V288).